Reading from the N-terminus, the 62-residue chain is Photosystem II reaction center protein Z (62 aa).

2 helical membrane passes run 8–28 (AVFA…VVFA) and 41–61 (FSGT…NSLI).

The protein belongs to the PsbZ family. As to quaternary structure, PSII is composed of 1 copy each of membrane proteins PsbA, PsbB, PsbC, PsbD, PsbE, PsbF, PsbH, PsbI, PsbJ, PsbK, PsbL, PsbM, PsbT, PsbY, PsbZ, Psb30/Ycf12, at least 3 peripheral proteins of the oxygen-evolving complex and a large number of cofactors. It forms dimeric complexes.

It is found in the plastid. The protein localises to the chloroplast thylakoid membrane. In terms of biological role, may control the interaction of photosystem II (PSII) cores with the light-harvesting antenna, regulates electron flow through the 2 photosystem reaction centers. PSII is a light-driven water plastoquinone oxidoreductase, using light energy to abstract electrons from H(2)O, generating a proton gradient subsequently used for ATP formation. In Daucus carota (Wild carrot), this protein is Photosystem II reaction center protein Z.